The sequence spans 365 residues: Fucose-specific lectin (365 aa).

The first 21 residues, 1-21 (MKLLHFTILLQVSLFPASSLA), serve as a signal peptide directing secretion. Repeat copies occupy residues 22-79 (QAGG…NDTI), 80-141 (AKAR…NQYN), 142-206 (FQVA…RLAN), 207-261 (FGPA…VRTA), 262-309 (KPRT…DGAF), and 310-365 (EHSA…IPPA). Residues 22–365 (QAGGNNTEVQ…RRGILAIPPA (344 aa)) form a 6 X approximate tandem repeats region. N-linked (GlcNAc...) asparagine glycosylation is present at asparagine 26. Residues arginine 51, glutamate 63, and tryptophan 70 each coordinate beta-L-fucose. 2 N-linked (GlcNAc...) asparagine glycosylation sites follow: asparagine 76 and asparagine 85. Arginine 111 contributes to the beta-L-fucose binding site. An N-linked (GlcNAc...) asparagine glycan is attached at asparagine 118. Glutamate 123, tryptophan 132, arginine 164, glutamate 176, tryptophan 201, and arginine 231 together coordinate beta-L-fucose. The N-linked (GlcNAc...) asparagine glycan is linked to asparagine 248. The beta-L-fucose site is built by arginine 283, arginine 333, and glutamate 347.

Belongs to the fungal fucose-specific lectin family. Homodimer.

The protein localises to the secreted. Functionally, probable L-fucose-binding lectin. The polypeptide is Fucose-specific lectin (Arthroderma benhamiae (strain ATCC MYA-4681 / CBS 112371) (Trichophyton mentagrophytes)).